The chain runs to 308 residues: Aspartate carbamoyltransferase catalytic subunit (308 aa).

Residues Arg-55 and Thr-56 each contribute to the carbamoyl phosphate site. Lys-83 provides a ligand contact to L-aspartate. Arg-105, His-133, and Gln-136 together coordinate carbamoyl phosphate. L-aspartate-binding residues include Arg-166 and Arg-220. Positions 261 and 262 each coordinate carbamoyl phosphate.

Belongs to the aspartate/ornithine carbamoyltransferase superfamily. ATCase family. As to quaternary structure, heterododecamer (2C3:3R2) of six catalytic PyrB chains organized as two trimers (C3), and six regulatory PyrI chains organized as three dimers (R2).

It catalyses the reaction carbamoyl phosphate + L-aspartate = N-carbamoyl-L-aspartate + phosphate + H(+). It functions in the pathway pyrimidine metabolism; UMP biosynthesis via de novo pathway; (S)-dihydroorotate from bicarbonate: step 2/3. Functionally, catalyzes the condensation of carbamoyl phosphate and aspartate to form carbamoyl aspartate and inorganic phosphate, the committed step in the de novo pyrimidine nucleotide biosynthesis pathway. This chain is Aspartate carbamoyltransferase catalytic subunit, found in Chlorobium limicola (strain DSM 245 / NBRC 103803 / 6330).